The following is a 372-amino-acid chain: Mevalonate 3,5-bisphosphate decarboxylase (372 aa).

It belongs to the mevalonate 3,5-bisphosphate decarboxylase family. Homodimer.

It catalyses the reaction (R)-3,5-bisphosphomevalonate + H(+) = isopentenyl phosphate + phosphate + CO2. The protein operates within isoprenoid biosynthesis; isopentenyl diphosphate biosynthesis via mevalonate pathway. Catalyzes the ATP-independent decarboxylation of (R)-mevalonate 3,5-bisphosphate to isopentenyl phosphate. Functions in an alternative mevalonate pathway, only present in extreme acidophiles of the Thermoplasmatales order, which passes through mevalonate 3-phosphate rather than mevalonate 5-phosphate. This chain is Mevalonate 3,5-bisphosphate decarboxylase, found in Thermoplasma volcanium (strain ATCC 51530 / DSM 4299 / JCM 9571 / NBRC 15438 / GSS1).